The primary structure comprises 250 residues: Undecaprenyl-diphosphatase (250 aa).

7 helical membrane-spanning segments follow: residues 35 to 55 (DLSV…IFVG), 73 to 93 (INLT…GVLL), 100 to 120 (SLSN…ALLI), 146 to 166 (ALAI…SLLI), 171 to 191 (EIAL…AGLL), 200 to 220 (SYSI…LFIL), and 229 to 249 (LKIF…LGGI).

It belongs to the UppP family.

It is found in the cell inner membrane. The enzyme catalyses di-trans,octa-cis-undecaprenyl diphosphate + H2O = di-trans,octa-cis-undecaprenyl phosphate + phosphate + H(+). Catalyzes the dephosphorylation of undecaprenyl diphosphate (UPP). Confers resistance to bacitracin. This Thermosipho melanesiensis (strain DSM 12029 / CIP 104789 / BI429) protein is Undecaprenyl-diphosphatase.